The sequence spans 84 residues: MSAFPVHAAFEKDFLVQLVVVDLNDSMDQVAEKVAYHCVNRRVAPREGVMRVRKHRSTELFPRDMTIAESGLNPTEVIDVVFEE.

This sequence belongs to the TmoB/XamoB family. The alkene monooxygenase multicomponent enzyme system is composed of an electron transfer component and a monooxygenase component interacting with the effector protein TmoD. The electron transfer component is composed of a ferredoxin reductase (TmoF) and a ferredoxin (TmoC), and the monooxygenase component is formed by a heterohexamer (dimer of heterotrimers) of two alpha subunits (TmoA), two beta subunits (TmoE) and two gamma subunits (TmoB).

It catalyses the reaction toluene + NADH + O2 + H(+) = 4-methylphenol + NAD(+) + H2O. It participates in xenobiotic degradation; toluene degradation. Inhibited by Zn(2+) and Cu(2+). In terms of biological role, component of the toluene-4-monooxygenase multicomponent enzyme system which catalyzes the O2- and NADH-dependent hydroxylation of toluene to form p-cresol. Also able to convert benzene to phenol, catechol, and 1,2,3-trihydroxybenzene by successive hydroxylations. In Ectopseudomonas mendocina (Pseudomonas mendocina), this protein is Toluene-4-monooxygenase system, hydroxylase component subunit gamma.